Reading from the N-terminus, the 247-residue chain is Pyridoxine 5'-phosphate synthase (247 aa).

Asn12 is a 3-amino-2-oxopropyl phosphate binding site. Residue 14 to 15 (DH) participates in 1-deoxy-D-xylulose 5-phosphate binding. Arg23 contributes to the 3-amino-2-oxopropyl phosphate binding site. The Proton acceptor role is filled by His48. 2 residues coordinate 1-deoxy-D-xylulose 5-phosphate: Arg50 and His55. Residue Glu75 is the Proton acceptor of the active site. Thr105 contacts 1-deoxy-D-xylulose 5-phosphate. His196 serves as the catalytic Proton donor. 3-amino-2-oxopropyl phosphate is bound by residues Gly197 and 218–219 (GH).

Belongs to the PNP synthase family. Homooctamer; tetramer of dimers.

The protein localises to the cytoplasm. It catalyses the reaction 3-amino-2-oxopropyl phosphate + 1-deoxy-D-xylulose 5-phosphate = pyridoxine 5'-phosphate + phosphate + 2 H2O + H(+). The protein operates within cofactor biosynthesis; pyridoxine 5'-phosphate biosynthesis; pyridoxine 5'-phosphate from D-erythrose 4-phosphate: step 5/5. Its function is as follows. Catalyzes the complicated ring closure reaction between the two acyclic compounds 1-deoxy-D-xylulose-5-phosphate (DXP) and 3-amino-2-oxopropyl phosphate (1-amino-acetone-3-phosphate or AAP) to form pyridoxine 5'-phosphate (PNP) and inorganic phosphate. The sequence is that of Pyridoxine 5'-phosphate synthase from Pseudomonas fluorescens (strain SBW25).